The primary structure comprises 235 residues: Thrombin-like enzyme bilineobin (235 aa).

In terms of domain architecture, Peptidase S1 spans 1 to 227 (IIGGDECNIN…HLDWIQSIIA (227 aa)). 6 disulfides stabilise this stretch: C7/C141, C28/C44, C78/C234, C120/C188, C152/C167, and C178/C203. The active-site Charge relay system is H43. Residues N45, N57, and N81 are each glycosylated (N-linked (GlcNAc...) asparagine). D88 acts as the Charge relay system in catalysis. Residues N132 and N148 are each glycosylated (N-linked (GlcNAc...) asparagine). Catalysis depends on S182, which acts as the Charge relay system. N-linked (GlcNAc...) asparagine glycosylation is present at N229.

This sequence belongs to the peptidase S1 family. Snake venom subfamily. As to quaternary structure, monomer. Glycosylated. In terms of tissue distribution, expressed by the venom gland.

It is found in the secreted. Its activity is regulated as follows. Not inhibited by hirudin. Thrombin-like snake venom serine protease that has coagulant activity by releasing fibrinopeptides A and B from fibrinogen alpha (FGA) and beta (FGB), with a preference for beta chain. The polypeptide is Thrombin-like enzyme bilineobin (Agkistrodon bilineatus (Cantil)).